A 134-amino-acid polypeptide reads, in one-letter code: ATP synthase epsilon chain, chloroplastic (134 aa).

The protein belongs to the ATPase epsilon chain family. As to quaternary structure, F-type ATPases have 2 components, CF(1) - the catalytic core - and CF(0) - the membrane proton channel. CF(1) has five subunits: alpha(3), beta(3), gamma(1), delta(1), epsilon(1). CF(0) has three main subunits: a, b and c.

Its subcellular location is the plastid. It is found in the chloroplast thylakoid membrane. Produces ATP from ADP in the presence of a proton gradient across the membrane. The protein is ATP synthase epsilon chain, chloroplastic of Spinacia oleracea (Spinach).